We begin with the raw amino-acid sequence, 118 residues long: Fluoride-specific ion channel FluC 1 (118 aa).

The next 2 helical transmembrane spans lie at 5 to 25 (FLLV…ISVL) and 47 to 67 (FLLG…FLGT). Na(+)-binding residues include glycine 71 and threonine 74. A helical membrane pass occupies residues 98-118 (YLGFTYVFGLIAAFLGMMLGV).

Belongs to the fluoride channel Fluc/FEX (TC 1.A.43) family.

It is found in the cell membrane. It catalyses the reaction fluoride(in) = fluoride(out). With respect to regulation, na(+) is not transported, but it plays an essential structural role and its presence is essential for fluoride channel function. Fluoride-specific ion channel. Important for reducing fluoride concentration in the cell, thus reducing its toxicity. The sequence is that of Fluoride-specific ion channel FluC 1 from Listeria monocytogenes serovar 1/2a (strain ATCC BAA-679 / EGD-e).